A 318-amino-acid chain; its full sequence is Protein teg (318 aa).

One can recognise a PNPLA domain in the interval 7-182 (ITFDGGGTLG…VATNTSTASI (176 aa)). The short motif at 11 to 16 (GGGTLG) is the GXGXXG element. The GXSXG motif lies at 42-46 (GNSIG). The Nucleophile role is filled by Ser44. The active-site Proton acceptor is Asp169.

Functionally, probable lipid hydrolase. The chain is Protein teg (teg) from Priestia megaterium (strain ATCC 14581 / DSM 32 / CCUG 1817 / JCM 2506 / NBRC 15308 / NCIMB 9376 / NCTC 10342 / NRRL B-14308 / VKM B-512 / Ford 19) (Bacillus megaterium).